A 105-amino-acid chain; its full sequence is Small ribosomal subunit protein uS10 (105 aa).

Belongs to the universal ribosomal protein uS10 family. Part of the 30S ribosomal subunit.

Its function is as follows. Involved in the binding of tRNA to the ribosomes. This Synechocystis sp. (strain ATCC 27184 / PCC 6803 / Kazusa) protein is Small ribosomal subunit protein uS10.